Consider the following 257-residue polypeptide: Diphthine synthase (257 aa).

Residues isoleucine 11, aspartate 89, isoleucine 92, 117–118, leucine 169, leucine 210, and histidine 235 contribute to the S-adenosyl-L-methionine site; that span reads SV.

Belongs to the diphthine synthase family. As to quaternary structure, homodimer.

The catalysed reaction is 2-[(3S)-amino-3-carboxypropyl]-L-histidyl-[translation elongation factor 2] + 3 S-adenosyl-L-methionine = diphthine-[translation elongation factor 2] + 3 S-adenosyl-L-homocysteine + 3 H(+). It functions in the pathway protein modification; peptidyl-diphthamide biosynthesis. Functionally, S-adenosyl-L-methionine-dependent methyltransferase that catalyzes the trimethylation of the amino group of the modified target histidine residue in translation elongation factor 2 (EF-2), to form an intermediate called diphthine. The three successive methylation reactions represent the second step of diphthamide biosynthesis. The sequence is that of Diphthine synthase from Saccharolobus solfataricus (strain ATCC 35092 / DSM 1617 / JCM 11322 / P2) (Sulfolobus solfataricus).